A 140-amino-acid polypeptide reads, in one-letter code: Sex-regulated protein janus-B (140 aa).

Arg42 is a binding site for substrate. His69 acts as the Proton acceptor in catalysis. Substrate is bound at residue 110 to 112 (SRT).

The protein belongs to the janus family.

Its function is as follows. JanA and janB regulate somatic sex differentiation. The polypeptide is Sex-regulated protein janus-B (janB) (Drosophila orena (Fruit fly)).